A 469-amino-acid chain; its full sequence is Peripherin (469 aa).

Composition is skewed to low complexity over residues 1-18 and 27-53; these read MSHP…SYRR and SPGA…PGSS. Residues 1-60 are disordered; sequence MSHPSGLRSSVSSTSYRRTFGPPPSLSPGAFSYSSSSRFSSSRLLGSASPGSSVRLGSFR. The interval 1 to 98 is head; it reads MSHPSGLRSS…FLATRSNEKQ (98 aa). Tyrosine 16 is subject to 3'-nitrotyrosine. Phosphoserine occurs at positions 27, 49, and 58. The 311-residue stretch at 96–406 folds into the IF rod domain; that stretch reads EKQELQELND…KLLEGEESRI (311 aa). The segment at 99 to 131 is coil 1A; that stretch reads ELQELNDRFANFIEKVRFLEQQNAALRGELNQA. The interval 132–142 is linker 1; it reads RGQEPARADQL. A coil 1B region spans residues 143–238; sequence CQQELRELRR…KLHEEELRDL (96 aa). The linker 2 stretch occupies residues 239–261; the sequence is QLSVESQQVQHVEVEATVKPELT. A coil 2 region spans residues 262-404; it reads AALRDIRAQY…YRKLLEGEES (143 aa). Tyrosine 378 bears the 3'-nitrotyrosine mark. The interval 405–469 is tail; sequence RISVPVHSFA…SELDKSPQSY (65 aa). Residues 447–469 form a disordered region; that stretch reads GEQVVTESQKEQHSELDKSPQSY. Residue tyrosine 469 is modified to Phosphotyrosine.

This sequence belongs to the intermediate filament family. As to quaternary structure, forms homodimers (in vitro). Homopolymerizes into a filamentous network (in vitro). Forms heterodimers with NEFL, NEFM or NEFH (in vitro). Interacts with DST (via C-terminus). Interacts with RAB7A; the interaction is direct. Interacts with PRKCE (via phorbol-ester/DAG-type 2 domain). Phosphorylated; phosphorylation increases after nerve injury in regenerating neurons.

Its subcellular location is the cytoplasm. The protein resides in the cytoskeleton. It is found in the cell projection. The protein localises to the axon. It localises to the perikaryon. In terms of biological role, class-III neuronal intermediate filament protein. May form an independent structural network without the involvement of other neurofilaments or may cooperate with the neuronal intermediate filament proteins NEFL, NEFH, NEFM and INA to form a filamentous network. Assembly of the neuronal intermediate filaments may be regulated by RAB7A. Plays a role in the development of unmyelinated sensory neurons. May be involved in axon elongation and axon regeneration after injury. Inhibits neurite extension in type II spiral ganglion neurons in the cochlea. This chain is Peripherin (PRPH), found in Bos taurus (Bovine).